Consider the following 183-residue polypeptide: GMP synthase [glutamine-hydrolyzing] subunit A (183 aa).

Residues 3–183 form the Glutamine amidotransferase type-1 domain; the sequence is HILVVDNHGQ…VFENFVAICE (181 aa). Cys-74 acts as the Nucleophile in catalysis. Active-site residues include His-162 and Glu-164.

Heterodimer composed of a glutamine amidotransferase subunit (A) and a GMP-binding subunit (B).

The catalysed reaction is XMP + L-glutamine + ATP + H2O = GMP + L-glutamate + AMP + diphosphate + 2 H(+). Its pathway is purine metabolism; GMP biosynthesis; GMP from XMP (L-Gln route): step 1/1. Functionally, catalyzes the synthesis of GMP from XMP. The polypeptide is GMP synthase [glutamine-hydrolyzing] subunit A (Halobacterium salinarum (strain ATCC 700922 / JCM 11081 / NRC-1) (Halobacterium halobium)).